We begin with the raw amino-acid sequence, 448 residues long: Cytoplasmic tRNA 2-thiolation protein 2 (448 aa).

The protein belongs to the CTU2/NCS2 family.

It localises to the cytoplasm. It participates in tRNA modification; 5-methoxycarbonylmethyl-2-thiouridine-tRNA biosynthesis. Functionally, plays a central role in 2-thiolation of mcm(5)S(2)U at tRNA wobble positions of tRNA(Lys), tRNA(Glu) and tRNA(Gln). May act by forming a heterodimer with NCS6 that ligates sulfur from thiocarboxylated URM1 onto the uridine of tRNAs at wobble position. Prior mcm(5) tRNA modification by the elongator complex is required for 2-thiolation. May also be involved in protein urmylation. In Scheffersomyces stipitis (strain ATCC 58785 / CBS 6054 / NBRC 10063 / NRRL Y-11545) (Yeast), this protein is Cytoplasmic tRNA 2-thiolation protein 2.